A 198-amino-acid polypeptide reads, in one-letter code: Recombination protein RecR (198 aa).

The C4-type zinc finger occupies 57 to 72 (CSVCGHITDQDPCAIC). The Toprim domain occupies 80–175 (SLICVVQDPK…RTTRIAHGLP (96 aa)).

It belongs to the RecR family.

Functionally, may play a role in DNA repair. It seems to be involved in an RecBC-independent recombinational process of DNA repair. It may act with RecF and RecO. The polypeptide is Recombination protein RecR (Oceanobacillus iheyensis (strain DSM 14371 / CIP 107618 / JCM 11309 / KCTC 3954 / HTE831)).